We begin with the raw amino-acid sequence, 378 residues long: UPF0754 membrane protein BCG9842_B4423 (378 aa).

The helical transmembrane segment at 357–377 threads the bilayer; the sequence is YLGALLGGIIGLVQGLLLLFL.

Belongs to the UPF0754 family.

Its subcellular location is the cell membrane. In Bacillus cereus (strain G9842), this protein is UPF0754 membrane protein BCG9842_B4423.